Here is a 378-residue protein sequence, read N- to C-terminus: Putative glutamate--cysteine ligase 2 (378 aa).

Belongs to the glutamate--cysteine ligase type 2 family. YbdK subfamily.

It catalyses the reaction L-cysteine + L-glutamate + ATP = gamma-L-glutamyl-L-cysteine + ADP + phosphate + H(+). Its function is as follows. ATP-dependent carboxylate-amine ligase which exhibits weak glutamate--cysteine ligase activity. The polypeptide is Putative glutamate--cysteine ligase 2 (Ectopseudomonas mendocina (strain ymp) (Pseudomonas mendocina)).